The chain runs to 179 residues: O-acetyl-ADP-ribose deacetylase (179 aa).

The 175-residue stretch at 1 to 175 (MTSRLQVIQG…LYARLLTQQG (175 aa)) folds into the Macro domain. Residues 11 to 12 (DI), Asn25, 33 to 35 (GVD), and 122 to 126 (STGVY) contribute to the substrate site. The active-site Proton acceptor is Asp35.

Belongs to the MacroD-type family. YmdB subfamily. As to quaternary structure, homodimer. Interacts with RNase III.

The catalysed reaction is 3''-O-acetyl-ADP-D-ribose + H2O = ADP-D-ribose + acetate + H(+). It carries out the reaction 2''-O-acetyl-ADP-D-ribose + H2O = ADP-D-ribose + acetate + H(+). Its function is as follows. Deacetylates O-acetyl-ADP ribose to yield ADP-ribose and free acetate. Down-regulates ribonuclease 3 (RNase III) activity. Acts by interacting directly with the region of the ribonuclease that is required for dimerization/activation. The polypeptide is O-acetyl-ADP-ribose deacetylase (Salmonella typhi).